The following is a 198-amino-acid chain: Recombination protein RecR (198 aa).

The segment at cysteine 56–cysteine 71 adopts a C4-type zinc-finger fold. A Toprim domain is found at histidine 79–proline 174.

Belongs to the RecR family.

In terms of biological role, may play a role in DNA repair. It seems to be involved in an RecBC-independent recombinational process of DNA repair. It may act with RecF and RecO. In Xylella fastidiosa (strain 9a5c), this protein is Recombination protein RecR.